Consider the following 155-residue polypeptide: Transcriptional repressor NrdR (155 aa).

Residues 1–24 (MRCPYCGHEDSQVKDSRPTEDGAA) form a disordered region. A zinc finger spans residues 3–34 (CPYCGHEDSQVKDSRPTEDGAAIRRRRQCEDC). Basic and acidic residues predominate over residues 7 to 24 (GHEDSQVKDSRPTEDGAA). The 91-residue stretch at 49–139 (VVVIKAGGTR…VYRDFTEARD (91 aa)) folds into the ATP-cone domain.

The protein belongs to the NrdR family. It depends on Zn(2+) as a cofactor.

Negatively regulates transcription of bacterial ribonucleotide reductase nrd genes and operons by binding to NrdR-boxes. This is Transcriptional repressor NrdR from Sphingopyxis alaskensis (strain DSM 13593 / LMG 18877 / RB2256) (Sphingomonas alaskensis).